A 1225-amino-acid chain; its full sequence is ATP-dependent helicase/nuclease subunit A (1225 aa).

The UvrD-like helicase ATP-binding domain occupies 11–478; sequence AQWTDAQWKS…IDLSKNFRSR (468 aa). 32-39 contacts ATP; sequence AAAGSGKT. The 312-residue stretch at 479-790 folds into the UvrD-like helicase C-terminal domain; that stretch reads KEVLATTNYL…RMMTVHSSKG (312 aa). Basic and acidic residues predominate over residues 999 to 1014; that stretch reads EKPSKQSVSELKRQLE. Positions 999–1018 are disordered; that stretch reads EKPSKQSVSELKRQLETEES.

The protein belongs to the helicase family. AddA subfamily. As to quaternary structure, heterodimer of AddA and AddB/RexB. Mg(2+) is required as a cofactor.

It catalyses the reaction Couples ATP hydrolysis with the unwinding of duplex DNA by translocating in the 3'-5' direction.. It carries out the reaction ATP + H2O = ADP + phosphate + H(+). Its function is as follows. The heterodimer acts as both an ATP-dependent DNA helicase and an ATP-dependent, dual-direction single-stranded exonuclease. Recognizes the chi site generating a DNA molecule suitable for the initiation of homologous recombination. The AddA nuclease domain is required for chi fragment generation; this subunit has the helicase and 3' -&gt; 5' nuclease activities. The protein is ATP-dependent helicase/nuclease subunit A of Staphylococcus haemolyticus (strain JCSC1435).